A 66-amino-acid chain; its full sequence is Toxin Aah6 (66 aa).

Residues 2–65 form the LCN-type CS-alpha/beta domain; that stretch reads RDGYVVKNGT…LYGDDGTYCS (64 aa). The N-linked (GlcNAc...) asparagine glycan is linked to asparagine 9. 4 disulfide bridges follow: cysteine 13-cysteine 64, cysteine 17-cysteine 40, cysteine 26-cysteine 45, and cysteine 30-cysteine 47.

This sequence belongs to the long (4 C-C) scorpion toxin superfamily. Sodium channel inhibitor family. Beta subfamily. In terms of processing, N-glycans are core-fucosylated, heterogeneous and short which could be the result of extensive trimming. In terms of tissue distribution, expressed by the venom gland.

Its subcellular location is the secreted. Its function is as follows. Beta toxins bind voltage-independently at site-4 of sodium channels and shift the voltage of activation toward more negative potentials thereby affecting sodium channel activation and promoting spontaneous and repetitive firing. This toxin is active only on insects. This toxin has very low anti-insect activity. The polypeptide is Toxin Aah6 (Androctonus australis (Sahara scorpion)).